A 447-amino-acid chain; its full sequence is 2-oxoadipate dioxygenase/decarboxylase (447 aa).

H68, R72, and H224 together coordinate 2-oxoadipate. A Fe(2+)-binding site is contributed by H68. Fe(2+) is bound by residues H224 and E290. Position 391 (V391) interacts with 2-oxoadipate.

It belongs to the 2-oxoadipate dioxygenase/decarboxylase family. Fe(2+) serves as cofactor.

The catalysed reaction is 2-oxoadipate + O2 = (R)-2-hydroxyglutarate + CO2. Catalyzes the decarboxylation and hydroxylation of 2-oxoadipate (2OA) to form D-2-hydroxyglutarate (D-2-HGA). The chain is 2-oxoadipate dioxygenase/decarboxylase from Shigella flexneri.